Here is a 160-residue protein sequence, read N- to C-terminus: Class II hydrophobin 8 (160 aa).

4 cysteine pairs are disulfide-bonded: C92–C141, C102–C132, C103–C115, and C142–C153.

The protein belongs to the cerato-ulmin hydrophobin family. Homodimer. Homodimers further self-assemble to form highly ordered films at water-air interfaces through intermolecular interactions.

The protein resides in the secreted. It is found in the cell wall. Aerial growth, conidiation, and dispersal of filamentous fungi in the environment rely upon a capability of their secreting small amphipathic proteins called hydrophobins (HPBs) with low sequence identity. Class I can self-assemble into an outermost layer of rodlet bundles on aerial cell surfaces, conferring cellular hydrophobicity that supports fungal growth, development and dispersal; whereas Class II form highly ordered films at water-air interfaces through intermolecular interactions but contribute nothing to the rodlet structure. The sequence is that of Class II hydrophobin 8 from Trichoderma asperellum (strain ATCC 204424 / CBS 433.97 / NBRC 101777).